Consider the following 253-residue polypeptide: Solute carrier family 66 member 2 (253 aa).

Helical transmembrane passes span 7–27 (GWLL…AMVF), 49–69 (FSTY…LFWF), 72–92 (HFES…LLML), 125–145 (FADY…ITYL), 150–170 (ALFV…LGVP), and 214–234 (VCGL…YVFT). The PQ-loop 1 domain maps to 14–80 (HQLVSWGAAG…RHFESPLLWQ (67 aa)). One can recognise a PQ-loop 2 domain in the interval 160–215 (AVLTEAMLGVPQLYRNHRHQSTEGMSIKMVLMWTSGDTFKTAYFLLNGAPLQFSVC).

It localises to the membrane. This chain is Solute carrier family 66 member 2 (SLC66A2), found in Bos taurus (Bovine).